Here is a 414-residue protein sequence, read N- to C-terminus: Eukaryotic initiation factor 4A-1 (414 aa).

The Q motif signature appears at 41–69 (ESFDDMGLQENLLRGIYAYGFEKPSAIQQ). Positions 72-242 (IVPFCKGLDV…RKFMNKPVRI (171 aa)) constitute a Helicase ATP-binding domain. 85 to 92 (AQSGTGKT) is an ATP binding site. The DEAD box motif lies at 190 to 193 (DEAD). A Helicase C-terminal domain is found at 253–414 (GIKQFYVNVE…ELPANVADLL (162 aa)).

Belongs to the DEAD box helicase family. eIF4A subfamily. As to quaternary structure, eIF4F is a multi-subunit complex, the composition of which varies with external and internal environmental conditions. It is composed of at least EIF4A, EIF4E and EIF4G.

It catalyses the reaction ATP + H2O = ADP + phosphate + H(+). Its function is as follows. ATP-dependent RNA helicase which is a subunit of the eIF4F complex involved in cap recognition and is required for mRNA binding to ribosome. In the current model of translation initiation, eIF4A unwinds RNA secondary structures in the 5'-UTR of mRNAs which is necessary to allow efficient binding of the small ribosomal subunit, and subsequent scanning for the initiator codon. The chain is Eukaryotic initiation factor 4A-1 from Oryza sativa subsp. japonica (Rice).